The chain runs to 386 residues: Ribonucleoside-diphosphate reductase subunit M2 (386 aa).

Positions 1-24 (MSSTRSPLKTKNENTISTKMNNMS) are enriched in polar residues. Residues 1–36 (MSSTRSPLKTKNENTISTKMNNMSFVDKENTPPSLS) are disordered. Residue Ser-6 is modified to Phosphoserine. Thr-31 is modified (phosphothreonine). Asp-135, Glu-166, and His-169 together coordinate Fe cation. Tyr-173 is a catalytic residue. Glu-229, Glu-263, and His-266 together coordinate Fe cation.

The protein belongs to the ribonucleoside diphosphate reductase small chain family. Heterodimer of a large and a small subunit. Fe cation is required as a cofactor.

Its subcellular location is the cytoplasm. The catalysed reaction is a 2'-deoxyribonucleoside 5'-diphosphate + [thioredoxin]-disulfide + H2O = a ribonucleoside 5'-diphosphate + [thioredoxin]-dithiol. In terms of biological role, provides the precursors necessary for DNA synthesis. Catalyzes the biosynthesis of deoxyribonucleotides from the corresponding ribonucleotides. In Danio rerio (Zebrafish), this protein is Ribonucleoside-diphosphate reductase subunit M2 (rrm2).